A 464-amino-acid polypeptide reads, in one-letter code: NAD(P) transhydrogenase subunit beta (464 aa).

Helical transmembrane passes span 54–74 (VQAYAWIVLAIAIGGAIGTVI), 86–106 (LVAAFHSLVGMAAVLVATGAL), 126–146 (VEMSLGLAVGAITFSGSVIAF), 164–184 (HPLNAVLGILLVVLLVVFAAT), 191–211 (FALMILAFALGFLLIIPIGGA), and 227–247 (AAAGIGFTLGNPLLIIAGALV). NADP(+)-binding positions include 316 to 317 (YG), 348 to 353 (VAGRMP), 390 to 394 (GANDV), 425 to 432 (KRSMASGY), and 451 to 452 (DA).

This sequence belongs to the PNT beta subunit family. In terms of assembly, complex of an alpha and a beta chain; in Rhodospirillum, the alpha chain seems to be made of two subunits.

Its subcellular location is the cell inner membrane. The catalysed reaction is NAD(+) + NADPH + H(+)(in) = NADH + NADP(+) + H(+)(out). Functionally, the transhydrogenation between NADH and NADP is coupled to respiration and ATP hydrolysis and functions as a proton pump across the membrane. The protein is NAD(P) transhydrogenase subunit beta (pntB) of Rhodospirillum rubrum (strain ATCC 11170 / ATH 1.1.1 / DSM 467 / LMG 4362 / NCIMB 8255 / S1).